A 741-amino-acid polypeptide reads, in one-letter code: NAD(P)H-quinone oxidoreductase subunit 5, chloroplastic (741 aa).

Transmembrane regions (helical) follow at residues 9–29 (WIIP…LLLV), 40–60 (WAFP…DLSI), 89–109 (IDPL…MVLI), 122–139 (LRFF…LGLV), 147–167 (IHIF…FWFT), 185–205 (GDFG…SLEF), 219–239 (NGVN…GAVA), 258–278 (TPIS…FLVA), 280–300 (LLPI…LGII), 396–416 (TTFL…CFWS), 425–445 (WLYS…TAFY), 544–564 (LFPL…GIPF), 603–623 (IYSV…YGSV), and 719–739 (YLFV…FYFL).

It belongs to the complex I subunit 5 family. NDH is composed of at least 16 different subunits, 5 of which are encoded in the nucleus.

It is found in the plastid. Its subcellular location is the chloroplast thylakoid membrane. The catalysed reaction is a plastoquinone + NADH + (n+1) H(+)(in) = a plastoquinol + NAD(+) + n H(+)(out). The enzyme catalyses a plastoquinone + NADPH + (n+1) H(+)(in) = a plastoquinol + NADP(+) + n H(+)(out). Functionally, NDH shuttles electrons from NAD(P)H:plastoquinone, via FMN and iron-sulfur (Fe-S) centers, to quinones in the photosynthetic chain and possibly in a chloroplast respiratory chain. The immediate electron acceptor for the enzyme in this species is believed to be plastoquinone. Couples the redox reaction to proton translocation, and thus conserves the redox energy in a proton gradient. The chain is NAD(P)H-quinone oxidoreductase subunit 5, chloroplastic (ndhF) from Liriodendron tulipifera (Tuliptree).